A 318-amino-acid polypeptide reads, in one-letter code: Pantothenate kinase (318 aa).

96-103 (GSVSVGKS) serves as a coordination point for ATP.

This sequence belongs to the prokaryotic pantothenate kinase family.

It localises to the cytoplasm. It carries out the reaction (R)-pantothenate + ATP = (R)-4'-phosphopantothenate + ADP + H(+). It functions in the pathway cofactor biosynthesis; coenzyme A biosynthesis; CoA from (R)-pantothenate: step 1/5. This is Pantothenate kinase from Bradyrhizobium sp. (strain ORS 278).